Consider the following 114-residue polypeptide: Iron-sulfur cluster insertion protein ErpA (114 aa).

Positions 42, 106, and 108 each coordinate iron-sulfur cluster.

It belongs to the HesB/IscA family. Homodimer. It depends on iron-sulfur cluster as a cofactor.

In terms of biological role, required for insertion of 4Fe-4S clusters for at least IspG. This is Iron-sulfur cluster insertion protein ErpA from Buchnera aphidicola subsp. Acyrthosiphon pisum (strain APS) (Acyrthosiphon pisum symbiotic bacterium).